Reading from the N-terminus, the 53-residue chain is Lantibiotic mutacin-2 (53 aa).

The propeptide occupies 1–26 (MNKLNSNAVVSLNEVSDSELDTILGG). The segment at residues 36 to 41 (TVSYEC) is a cross-link (beta-methyllanthionine (Thr-Cys)). Cross-links (lanthionine (Ser-Cys)) lie at residues 38 to 52 (SYECRMNSWQHVFTC) and 45 to 53 (SWQHVFTCC). T51 bears the 2,3-didehydrobutyrine mark.

Maturation of lantibiotics involves the enzymatic conversion of Thr, and Ser into dehydrated AA and the formation of thioether bonds with cysteine. This is followed by membrane translocation and cleavage of the modified precursor. Post-translationally, it is not established whether the 2,3-didehydrobutyrine is the E- or Z-isomer.

Its function is as follows. Lanthionine-containing peptide antibiotic (lantibiotic) active on Gram-positive bacteria including M.luteus, S.aureus, Streptococcus, P.micros, P.acidilactici, C.sporogenes, C.diphtheriae, A.viscosus, G.vaginalis, P.acnes, L.monocytogenes and M.smegmatis, and Gram-negative bacteria including C.jejuni, H.pylori and N.gonorrhoeae. Transiently and partially depolarizes the transmembrane electrical potential and pH gradient of susceptible cells, inhibits the uptake of amino acids and depletes the intracellular ATP pool. This chain is Lantibiotic mutacin-2, found in Streptococcus mutans.